The primary structure comprises 427 residues: 3-isopropylmalate dehydratase large subunit (427 aa).

Residues cysteine 308, cysteine 368, and cysteine 371 each coordinate [4Fe-4S] cluster.

This sequence belongs to the aconitase/IPM isomerase family. LeuC type 2 subfamily. As to quaternary structure, heterodimer of LeuC and LeuD. [4Fe-4S] cluster serves as cofactor.

The catalysed reaction is (2R,3S)-3-isopropylmalate = (2S)-2-isopropylmalate. It functions in the pathway amino-acid biosynthesis; L-leucine biosynthesis; L-leucine from 3-methyl-2-oxobutanoate: step 2/4. Functionally, catalyzes the isomerization between 2-isopropylmalate and 3-isopropylmalate, via the formation of 2-isopropylmaleate. The polypeptide is 3-isopropylmalate dehydratase large subunit (Geobacter sulfurreducens (strain ATCC 51573 / DSM 12127 / PCA)).